We begin with the raw amino-acid sequence, 404 residues long: Tryptophan synthase beta chain (404 aa).

Position 99 is an N6-(pyridoxal phosphate)lysine (lysine 99).

This sequence belongs to the TrpB family. As to quaternary structure, tetramer of two alpha and two beta chains. Pyridoxal 5'-phosphate serves as cofactor.

It catalyses the reaction (1S,2R)-1-C-(indol-3-yl)glycerol 3-phosphate + L-serine = D-glyceraldehyde 3-phosphate + L-tryptophan + H2O. Its pathway is amino-acid biosynthesis; L-tryptophan biosynthesis; L-tryptophan from chorismate: step 5/5. Functionally, the beta subunit is responsible for the synthesis of L-tryptophan from indole and L-serine. This chain is Tryptophan synthase beta chain, found in Rhizobium rhizogenes (strain K84 / ATCC BAA-868) (Agrobacterium radiobacter).